A 379-amino-acid chain; its full sequence is Alkanesulfonate monooxygenase (379 aa).

This sequence belongs to the SsuD family.

It carries out the reaction an alkanesulfonate + FMNH2 + O2 = an aldehyde + FMN + sulfite + H2O + 2 H(+). Its function is as follows. Catalyzes the desulfonation of aliphatic sulfonates. This Sorangium cellulosum (strain So ce56) (Polyangium cellulosum (strain So ce56)) protein is Alkanesulfonate monooxygenase.